A 226-amino-acid chain; its full sequence is Urease accessory protein UreF (226 aa).

This sequence belongs to the UreF family. As to quaternary structure, ureD, UreF and UreG form a complex that acts as a GTP-hydrolysis-dependent molecular chaperone, activating the urease apoprotein by helping to assemble the nickel containing metallocenter of UreC. The UreE protein probably delivers the nickel.

Its subcellular location is the cytoplasm. Functionally, required for maturation of urease via the functional incorporation of the urease nickel metallocenter. The sequence is that of Urease accessory protein UreF from Burkholderia lata (strain ATCC 17760 / DSM 23089 / LMG 22485 / NCIMB 9086 / R18194 / 383).